A 397-amino-acid chain; its full sequence is Phosphonopyruvate decarboxylase (397 aa).

It belongs to the TPP enzyme family. Thiamine diphosphate serves as cofactor. Mg(2+) is required as a cofactor.

It carries out the reaction 3-phosphonopyruvate + H(+) = phosphonoacetaldehyde + CO2. It participates in secondary metabolite biosynthesis; bialaphos biosynthesis. Functionally, involved in the biosynthesis of phosphinothricin tripeptide (PTT), also known as bialaphos (BA), a natural-product antibiotic and potent herbicide. Catalyzes the decarboxylation of phosphonopyruvate (PnPy) to generate phosphonoacetaldehyde (PnAA). This Streptomyces viridochromogenes (strain DSM 40736 / JCM 4977 / BCRC 1201 / Tue 494) protein is Phosphonopyruvate decarboxylase.